The sequence spans 291 residues: 4-hydroxy-tetrahydrodipicolinate synthase (291 aa).

Thr45 is a pyruvate binding site. The Proton donor/acceptor role is filled by Tyr133. Residue Lys161 is the Schiff-base intermediate with substrate of the active site. A pyruvate-binding site is contributed by Ile203.

This sequence belongs to the DapA family. Homotetramer; dimer of dimers.

The protein localises to the cytoplasm. It catalyses the reaction L-aspartate 4-semialdehyde + pyruvate = (2S,4S)-4-hydroxy-2,3,4,5-tetrahydrodipicolinate + H2O + H(+). The protein operates within amino-acid biosynthesis; L-lysine biosynthesis via DAP pathway; (S)-tetrahydrodipicolinate from L-aspartate: step 3/4. Functionally, catalyzes the condensation of (S)-aspartate-beta-semialdehyde [(S)-ASA] and pyruvate to 4-hydroxy-tetrahydrodipicolinate (HTPA). The polypeptide is 4-hydroxy-tetrahydrodipicolinate synthase (Laribacter hongkongensis (strain HLHK9)).